The primary structure comprises 308 residues: F420-non-reducing hydrogenase subunit G (308 aa).

It belongs to the [NiFe]/[NiFeSe] hydrogenase small subunit family. As to quaternary structure, the F420-non-reducing hydrogenase is composed of three subunits; MvhA, MvhD and MvhG. It forms a complex with the heterodisulfide reductase (hdr).

In terms of biological role, part of a complex that provides reducing equivalents for heterodisulfide reductase. In Methanothermobacter marburgensis (strain ATCC BAA-927 / DSM 2133 / JCM 14651 / NBRC 100331 / OCM 82 / Marburg) (Methanobacterium thermoautotrophicum), this protein is F420-non-reducing hydrogenase subunit G (mvhG).